A 327-amino-acid chain; its full sequence is Olfactory receptor 226 (327 aa).

The Extracellular segment spans residues 1-26 (MERRNHSGRVSEFVLLGFPAPAPLRV). Asparagine 5 carries an N-linked (GlcNAc...) asparagine glycan. A helical transmembrane segment spans residues 27-50 (LLFFLSLLAYVLVLTENMLIIIAI). Residues 51-58 (RNHPTLHK) lie on the Cytoplasmic side of the membrane. The chain crosses the membrane as a helical span at residues 59-80 (PMYFFLANMSFLEIWYVTVTIP). Over 81 to 104 (KMLAGFIGSKENHGQLISFEACMT) the chain is Extracellular. An intrachain disulfide couples cysteine 102 to cysteine 194. Residues 105 to 125 (QLYFFLGLGCTECVLLAVMAY) traverse the membrane as a helical segment. The Cytoplasmic portion of the chain corresponds to 126–144 (DRYVAICHPLHYPVIVSSR). A helical membrane pass occupies residues 145–163 (LCVQMAAGSWAGGFGISMV). Topologically, residues 164 to 201 (KVFLISRLSYCGPNTINHFFCDVSPLLNLSCTDMSTAE) are extracellular. Residues 202 to 224 (LTDFVLAIFILLGPLSVTGASYM) traverse the membrane as a helical segment. The Cytoplasmic segment spans residues 225–241 (AITGAVMRIPSAAGRHK). Residues 242–265 (AFSTCASHLTVVIIFYAASIFIYA) form a helical membrane-spanning segment. Residues 266-277 (RPKALSAFDTNK) lie on the Extracellular side of the membrane. The helical transmembrane segment at 278-297 (LVSVLYAVIVPLFNPIIYCL) threads the bilayer. Over 298–327 (RNQDVKRALRRTLHLAQDQEANTNKGSKNG) the chain is Cytoplasmic.

Belongs to the G-protein coupled receptor 1 family. As to expression, olfactory epithelium.

The protein localises to the cell membrane. Odorant receptor. In Rattus norvegicus (Rat), this protein is Olfactory receptor 226 (Olr226).